Here is a 200-residue protein sequence, read N- to C-terminus: dITP/XTP pyrophosphatase (200 aa).

8–13 (TGNQGK) provides a ligand contact to substrate. The active-site Proton acceptor is the Asp69. Residue Asp69 participates in Mg(2+) binding. Residues Ser70, 154–157 (FGYD), Lys177, and 182–183 (HR) contribute to the substrate site.

Belongs to the HAM1 NTPase family. Homodimer. It depends on Mg(2+) as a cofactor.

The enzyme catalyses XTP + H2O = XMP + diphosphate + H(+). The catalysed reaction is dITP + H2O = dIMP + diphosphate + H(+). It catalyses the reaction ITP + H2O = IMP + diphosphate + H(+). In terms of biological role, pyrophosphatase that catalyzes the hydrolysis of nucleoside triphosphates to their monophosphate derivatives, with a high preference for the non-canonical purine nucleotides XTP (xanthosine triphosphate), dITP (deoxyinosine triphosphate) and ITP. Seems to function as a house-cleaning enzyme that removes non-canonical purine nucleotides from the nucleotide pool, thus preventing their incorporation into DNA/RNA and avoiding chromosomal lesions. This is dITP/XTP pyrophosphatase from Vibrio vulnificus (strain CMCP6).